The sequence spans 500 residues: Probable cytosol aminopeptidase (500 aa).

2 residues coordinate Mn(2+): Lys262 and Asp267. The active site involves Lys274. Mn(2+) is bound by residues Asp285, Asp344, and Glu346. Arg348 is a catalytic residue.

This sequence belongs to the peptidase M17 family. Requires Mn(2+) as cofactor.

Its subcellular location is the cytoplasm. It catalyses the reaction Release of an N-terminal amino acid, Xaa-|-Yaa-, in which Xaa is preferably Leu, but may be other amino acids including Pro although not Arg or Lys, and Yaa may be Pro. Amino acid amides and methyl esters are also readily hydrolyzed, but rates on arylamides are exceedingly low.. It carries out the reaction Release of an N-terminal amino acid, preferentially leucine, but not glutamic or aspartic acids.. Its function is as follows. Presumably involved in the processing and regular turnover of intracellular proteins. Catalyzes the removal of unsubstituted N-terminal amino acids from various peptides. This Ehrlichia ruminantium (strain Welgevonden) protein is Probable cytosol aminopeptidase.